The primary structure comprises 408 residues: Broad specificity amino-acid racemase (408 aa).

The signal sequence occupies residues 1 to 21; that stretch reads MHKKTLLATLILGLLAGQAVA. Cysteines 70 and 96 form a disulfide. K74 (proton acceptor) is an active-site residue. Residue K74 is modified to N6-(pyridoxal phosphate)lysine. Position 173 (R173) interacts with substrate. Y300 functions as the Proton acceptor in the catalytic mechanism. M348 serves as a coordination point for substrate.

It belongs to the alanine racemase family. Bsr subfamily. As to quaternary structure, homodimer. Pyridoxal 5'-phosphate is required as a cofactor.

The protein localises to the periplasm. It carries out the reaction an L-alpha-amino acid = a D-alpha-amino acid. The enzyme catalyses L-lysine = D-lysine. The catalysed reaction is L-arginine = D-arginine. It catalyses the reaction L-alanine = D-alanine. It carries out the reaction L-serine = D-serine. The enzyme catalyses L-methionine = D-methionine. The catalysed reaction is L-leucine = D-leucine. It catalyses the reaction L-cysteine = D-cysteine. It carries out the reaction L-glutamine = D-glutamine. The enzyme catalyses L-asparagine = D-asparagine. The catalysed reaction is L-histidine = D-histidine. Its function is as follows. Amino-acid racemase able to utilize a broad range of substrates. Reversibly racemizes ten of the 19 natural chiral amino acids known, including both non-beta-branched aliphatic amino acids (Ala, Leu, Met, Ser, Cys, Gln and Asn) and positively charged amino acids (His, Lys and Arg). Is not active on negatively charged (Glu and Asp) or aromatic (Tyr, Trp and Phe) amino acids and displays minimal activity towards beta-branched aliphatic (Ile, Val and Thr) substrates. Enables bacteria to produce and release extracellular non-canonical D-amino acids (NCDAAs) that regulate diverse cellular processes. The chain is Broad specificity amino-acid racemase from Aeromonas hydrophila subsp. hydrophila (strain ATCC 7966 / DSM 30187 / BCRC 13018 / CCUG 14551 / JCM 1027 / KCTC 2358 / NCIMB 9240 / NCTC 8049).